An 860-amino-acid chain; its full sequence is DDB1- and CUL4-associated factor 6 (860 aa).

WD repeat units follow at residues 49-88 (VHDG…VLTT), 92-133 (GHRA…ETNR), 139-179 (CHYG…SCTK), 189-229 (NCRR…TRAT), and 251-290 (NKSC…AREL). Basic and acidic residues-rich tracts occupy residues 288–303 (RELK…EELR) and 312–334 (LRGD…RDGE). Disordered stretches follow at residues 288–340 (RELK…PNVS), 355–392 (EASE…SPDL), 407–490 (QFLQ…TTST), and 502–675 (IASS…GPGD). Ser336 carries the post-translational modification Phosphoserine. 2 stretches are compositionally biased toward polar residues: residues 379 to 388 (DISTLPTVPS) and 409 to 421 (LQPS…SAQA). The segment covering 422-441 (HSTSSPTESPHSTPLLSSPD) has biased composition (low complexity). The segment covering 457-467 (HQSDNNNEKLS) has biased composition (basic and acidic residues). Positions 480–490 (HYSTEGTTTST) are enriched in polar residues. A compositionally biased stretch (low complexity) spans 502-511 (IASSSRGIGS). Positions 535–549 (SETKAPEESSEDVTK) are enriched in basic and acidic residues. Positions 614–626 (TSTESATNENNTN) are enriched in low complexity. Residues 627–636 (PEPQFQTEAT) show a composition bias toward polar residues. A Phosphoserine modification is found at Ser649. Position 654 is a phosphothreonine (Thr654). The residue at position 657 (Ser657) is a Phosphoserine. One can recognise an IQ domain in the interval 676–705 (RRSAVARIQEFFRRRKERKEMEELDTLNIR). WD repeat units lie at residues 718–756 (NSRT…HLML) and 759–798 (ADNH…RIFN). A phosphoserine mark is found at Ser847 and Ser850.

Interacts with the nuclear receptors NR3C1 and AR in the presence of ligand. Interacts with DDB1, CUL4A and CUL4B. As to expression, highly expressed in skeletal muscle and testis. Expressed to a lesser degree in heart, prostate, and adrenal gland.

The protein localises to the nucleus. Its pathway is protein modification; protein ubiquitination. In terms of biological role, ligand-dependent coactivator of nuclear receptors. Enhance transcriptional activity of the nuclear receptors NR3C1 and AR. May function as a substrate receptor for CUL4-DDB1 E3 ubiquitin-protein ligase complex. The chain is DDB1- and CUL4-associated factor 6 (DCAF6) from Homo sapiens (Human).